Consider the following 219-residue polypeptide: C-8 sterol isomerase erg2 (219 aa).

The helical transmembrane segment at 1–21 (MKLTKFLTVFIPFIAGLIYYI) threads the bilayer.

This sequence belongs to the ERG2 family.

It is found in the endoplasmic reticulum membrane. The catalysed reaction is fecosterol = episterol. Its pathway is steroid metabolism; ergosterol biosynthesis. Its function is as follows. C-8 sterol isomerase; part of the third module of ergosterol biosynthesis pathway that includes by the late steps of the pathway. Erg2 catalyzes the reaction which results in unsaturation at C-7 in the B ring of sterols and thus converts fecosterol to episterol. The third module or late pathway involves the ergosterol synthesis itself through consecutive reactions that mainly occur in the endoplasmic reticulum (ER) membrane. Firstly, the squalene synthase erg9 catalyzes the condensation of 2 farnesyl pyrophosphate moieties to form squalene, which is the precursor of all steroids. Secondly, squalene is converted into lanosterol by the consecutive action of the squalene epoxidase erg1 and the lanosterol synthase erg7. The lanosterol 14-alpha-demethylase erg11/cyp1 catalyzes C14-demethylation of lanosterol to produce 4,4'-dimethyl cholesta-8,14,24-triene-3-beta-ol. In the next steps, a complex process involving various demethylation, reduction and desaturation reactions catalyzed by the C-14 reductase erg24 and the C-4 demethylation complex erg25-erg26-erg27 leads to the production of zymosterol. Erg28 likely functions in the C-4 demethylation complex reaction by tethering erg26 and Erg27 to the endoplasmic reticulum or to facilitate interaction between these proteins. Then, the sterol 24-C-methyltransferase erg6 catalyzes the methyl transfer from S-adenosyl-methionine to the C-24 of zymosterol to form fecosterol. The C-8 sterol isomerase erg2 catalyzes the reaction which results in unsaturation at C-7 in the B ring of sterols and thus converts fecosterol to episterol. The sterol-C5-desaturases erg31 and erg32 then catalyze the introduction of a C-5 double bond in the B ring to produce 5-dehydroepisterol. The C-22 sterol desaturase erg5 further converts 5-dehydroepisterol into ergosta-5,7,22,24(28)-tetraen-3beta-ol by forming the C-22(23) double bond in the sterol side chain. Finally, ergosta-5,7,22,24(28)-tetraen-3beta-ol is substrate of the C-24(28) sterol reductase erg4 to produce ergosterol. In the genus Schizosaccharomyces, a second route exists between lanosterol and fecosterol, via the methylation of lanosterol to eburicol by erg6, followed by C14-demethylation by erg11/cyp1 and C4-demethylation by the demethylation complex erg25-erg26-erg27. The protein is C-8 sterol isomerase erg2 of Schizosaccharomyces pombe (strain 972 / ATCC 24843) (Fission yeast).